A 255-amino-acid chain; its full sequence is Pyridoxine 5'-phosphate synthase (255 aa).

Residue N6 coordinates 3-amino-2-oxopropyl phosphate. 8 to 9 (DH) contributes to the 1-deoxy-D-xylulose 5-phosphate binding site. 3-amino-2-oxopropyl phosphate is bound at residue R17. H41 acts as the Proton acceptor in catalysis. Positions 43 and 48 each coordinate 1-deoxy-D-xylulose 5-phosphate. E68 (proton acceptor) is an active-site residue. Position 96 (T96) interacts with 1-deoxy-D-xylulose 5-phosphate. The active-site Proton donor is the H208. 3-amino-2-oxopropyl phosphate-binding positions include G209 and 230–231 (GQ).

It belongs to the PNP synthase family. As to quaternary structure, homooctamer; tetramer of dimers.

Its subcellular location is the cytoplasm. It carries out the reaction 3-amino-2-oxopropyl phosphate + 1-deoxy-D-xylulose 5-phosphate = pyridoxine 5'-phosphate + phosphate + 2 H2O + H(+). Its pathway is cofactor biosynthesis; pyridoxine 5'-phosphate biosynthesis; pyridoxine 5'-phosphate from D-erythrose 4-phosphate: step 5/5. In terms of biological role, catalyzes the complicated ring closure reaction between the two acyclic compounds 1-deoxy-D-xylulose-5-phosphate (DXP) and 3-amino-2-oxopropyl phosphate (1-amino-acetone-3-phosphate or AAP) to form pyridoxine 5'-phosphate (PNP) and inorganic phosphate. In Campylobacter lari (strain RM2100 / D67 / ATCC BAA-1060), this protein is Pyridoxine 5'-phosphate synthase.